The sequence spans 219 residues: NAD(P)H-quinone oxidoreductase subunit I (219 aa).

4Fe-4S ferredoxin-type domains lie at 55–84 and 95–124; these read GRIH…VDWV and RNYS…MTEE. Residues Cys-64, Cys-67, Cys-70, Cys-74, Cys-104, Cys-107, Cys-110, and Cys-114 each contribute to the [4Fe-4S] cluster site. The segment at 192–219 is disordered; sequence LKAAGSMKAAEDERESSSSASNMEESAG. Residues 208–219 are compositionally biased toward low complexity; that stretch reads SSSASNMEESAG.

This sequence belongs to the complex I 23 kDa subunit family. As to quaternary structure, NDH-1 is composed of at least 11 different subunits. [4Fe-4S] cluster is required as a cofactor.

It is found in the cellular thylakoid membrane. It carries out the reaction a plastoquinone + NADH + (n+1) H(+)(in) = a plastoquinol + NAD(+) + n H(+)(out). It catalyses the reaction a plastoquinone + NADPH + (n+1) H(+)(in) = a plastoquinol + NADP(+) + n H(+)(out). NDH-1 shuttles electrons from an unknown electron donor, via FMN and iron-sulfur (Fe-S) centers, to quinones in the respiratory and/or the photosynthetic chain. The immediate electron acceptor for the enzyme in this species is believed to be plastoquinone. Couples the redox reaction to proton translocation, and thus conserves the redox energy in a proton gradient. The chain is NAD(P)H-quinone oxidoreductase subunit I from Synechococcus sp. (strain CC9311).